A 465-amino-acid chain; its full sequence is Uronate isomerase (465 aa).

This sequence belongs to the metallo-dependent hydrolases superfamily. Uronate isomerase family.

The enzyme catalyses D-glucuronate = D-fructuronate. It carries out the reaction aldehydo-D-galacturonate = keto-D-tagaturonate. The protein operates within carbohydrate metabolism; pentose and glucuronate interconversion. This Bacillus velezensis (strain DSM 23117 / BGSC 10A6 / LMG 26770 / FZB42) (Bacillus amyloliquefaciens subsp. plantarum) protein is Uronate isomerase.